A 275-amino-acid polypeptide reads, in one-letter code: Nitrogenase iron protein 1 (275 aa).

Residue Gly-9–Ser-16 participates in ATP binding. [4Fe-4S] cluster is bound at residue Cys-97. Arg-100 is modified (ADP-ribosylarginine; by dinitrogenase reductase ADP-ribosyltransferase). Cys-132 is a [4Fe-4S] cluster binding site.

It belongs to the NifH/BchL/ChlL family. As to quaternary structure, homodimer. [4Fe-4S] cluster serves as cofactor. Post-translationally, the reversible ADP-ribosylation of Arg-100 inactivates the nitrogenase reductase and regulates nitrogenase activity.

It catalyses the reaction N2 + 8 reduced [2Fe-2S]-[ferredoxin] + 16 ATP + 16 H2O = H2 + 8 oxidized [2Fe-2S]-[ferredoxin] + 2 NH4(+) + 16 ADP + 16 phosphate + 6 H(+). The key enzymatic reactions in nitrogen fixation are catalyzed by the nitrogenase complex, which has 2 components: the iron protein and the molybdenum-iron protein. The chain is Nitrogenase iron protein 1 (nifH1) from Methanothermobacter thermautotrophicus (strain ATCC 29096 / DSM 1053 / JCM 10044 / NBRC 100330 / Delta H) (Methanobacterium thermoautotrophicum).